The primary structure comprises 490 residues: MFALTAYRLRCAAWLLATGIFLLLAGCSEAKAPTALERVQKEGVLRVVTRNSPATYFQDRNGETGFEYELAKRFAERLGVELKIETADNLDDLYAQLSRAGGPALAAAGLTPGRQDDASVRYSHTYLDVTPQVIYRNGQQRPTRPEDLVGKRIMVLKGSSHAAQLAELKKQYPELKYDESDAVEVVDLLRMVDVGDIDLTLVDSNELAMNQVYFPNVRVAFDFGEARGLAWALPGGDDDSLMNEVNAFLDQAKKEGLLQRLKDRYYGHVDVLGYVGAYTFAQHLQQRLPRYESHFKQSGKQLDTDWRLLAAIGYQESLWQPSATSKTGVRGLMMLTNRTAQAMGVSNRLDPKQSIQGGSKYFVQIRSELPESIREPDRSWFALAAYNIGGAHLEDARKMAEKEGLNPNKWLDVKKMLPRLAQKRWYAKTRYGYARGGETVHFVQNVRRYYDILTWVTQPQMEGSQIAESGLHLPGVNKTRPDDDEGDGKL.

The first 32 residues, 1–32 (MFALTAYRLRCAAWLLATGIFLLLAGCSEAKA), serve as a signal peptide directing secretion. Positions 33 to 269 (PTALERVQKE…RLKDRYYGHV (237 aa)) are non-LT domain. An LT domain region spans residues 270 to 490 (DVLGYVGAYT…PDDDEGDGKL (221 aa)). Glu316 is a catalytic residue. The tract at residues 467–490 (AESGLHLPGVNKTRPDDDEGDGKL) is disordered.

This sequence in the N-terminal section; belongs to the bacterial solute-binding protein 3 family. In the C-terminal section; belongs to the transglycosylase Slt family.

The protein localises to the cell outer membrane. The enzyme catalyses Exolytic cleavage of the (1-&gt;4)-beta-glycosidic linkage between N-acetylmuramic acid (MurNAc) and N-acetylglucosamine (GlcNAc) residues in peptidoglycan, from either the reducing or the non-reducing ends of the peptidoglycan chains, with concomitant formation of a 1,6-anhydrobond in the MurNAc residue.. Its function is as follows. Murein-degrading enzyme that degrades murein glycan strands and insoluble, high-molecular weight murein sacculi, with the concomitant formation of a 1,6-anhydromuramoyl product. Lytic transglycosylases (LTs) play an integral role in the metabolism of the peptidoglycan (PG) sacculus. Their lytic action creates space within the PG sacculus to allow for its expansion as well as for the insertion of various structures such as secretion systems and flagella. The protein is Membrane-bound lytic murein transglycosylase F of Pseudomonas paraeruginosa (strain DSM 24068 / PA7) (Pseudomonas aeruginosa (strain PA7)).